The following is a 206-amino-acid chain: Ras-related protein Ral-B (206 aa).

A GTP-binding site is contributed by 21–29; it reads GSGGVGKSA. An Effector region motif is present at residues 43 to 51; it reads YEPTKADSY. Residues 68-72, 128-131, and 158-160 contribute to the GTP site; these read DTAGQ, NKSD, and SAK. Residues 180 to 189 show a composition bias toward basic and acidic residues; the sequence is KMSENKDKNG. The segment at 180–206 is disordered; sequence KMSENKDKNGKKSGKNKKSFKERCCLL. Cys-203 bears the Cysteine methyl ester mark. Cys-203 is lipidated: S-geranylgeranyl cysteine. Residues 204–206 constitute a propeptide, removed in mature form; sequence CLL.

This sequence belongs to the small GTPase superfamily. Ras family. As to quaternary structure, interacts with EXOC2/Sec5 and EXOC8/Exo84. Interacts (via effector domain) with RALBP1. In terms of processing, prenylation is essential for membrane localization. Post-translationally, the farnesylated form confers resistance to the proapoptotic and anti-anchorage-dependent growth effects of some geranylgeranyltransferase I inhibitors.

It is found in the cell membrane. Its subcellular location is the midbody. It catalyses the reaction GTP + H2O = GDP + phosphate + H(+). Its activity is regulated as follows. Alternates between an inactive form bound to GDP and an active form bound to GTP. Activated by a guanine nucleotide-exchange factor (GEF) and inactivated by a GTPase-activating protein (GAP). Multifunctional GTPase involved in a variety of cellular processes including gene expression, cell migration, cell proliferation, oncogenic transformation and membrane trafficking. Accomplishes its multiple functions by interacting with distinct downstream effectors. Acts as a GTP sensor for GTP-dependent exocytosis of dense core vesicles. Required both to stabilize the assembly of the exocyst complex and to localize functional exocyst complexes to the leading edge of migrating cells. Required for suppression of apoptosis. In late stages of cytokinesis, upon completion of the bridge formation between dividing cells, mediates exocyst recruitment to the midbody to drive abscission. Involved in ligand-dependent receptor mediated endocytosis of the EGF and insulin receptors. The polypeptide is Ras-related protein Ral-B (RALB) (Macaca fascicularis (Crab-eating macaque)).